We begin with the raw amino-acid sequence, 175 residues long: SsrA-binding protein (175 aa).

2 disordered regions span residues 1–29 (MTRNPQPDRSKTAPKNAKRDPVASGERDA) and 152–175 (KRETDRRKTADRDAREAIARSRKS).

The protein belongs to the SmpB family.

Its subcellular location is the cytoplasm. Functionally, required for rescue of stalled ribosomes mediated by trans-translation. Binds to transfer-messenger RNA (tmRNA), required for stable association of tmRNA with ribosomes. tmRNA and SmpB together mimic tRNA shape, replacing the anticodon stem-loop with SmpB. tmRNA is encoded by the ssrA gene; the 2 termini fold to resemble tRNA(Ala) and it encodes a 'tag peptide', a short internal open reading frame. During trans-translation Ala-aminoacylated tmRNA acts like a tRNA, entering the A-site of stalled ribosomes, displacing the stalled mRNA. The ribosome then switches to translate the ORF on the tmRNA; the nascent peptide is terminated with the 'tag peptide' encoded by the tmRNA and targeted for degradation. The ribosome is freed to recommence translation, which seems to be the essential function of trans-translation. This chain is SsrA-binding protein, found in Koribacter versatilis (strain Ellin345).